A 338-amino-acid chain; its full sequence is DNA-directed RNA polymerase subunit alpha (338 aa).

The alpha N-terminal domain (alpha-NTD) stretch occupies residues 1–234; the sequence is MIHKNWAELI…DQLSIFVNFE (234 aa). The segment at 250-338 is alpha C-terminal domain (alpha-CTD); the sequence is FNPLLLKKVD…DLAKRFEDQF (89 aa).

Belongs to the RNA polymerase alpha chain family. In terms of assembly, homodimer. The RNAP catalytic core consists of 2 alpha, 1 beta, 1 beta' and 1 omega subunit. When a sigma factor is associated with the core the holoenzyme is formed, which can initiate transcription.

The enzyme catalyses RNA(n) + a ribonucleoside 5'-triphosphate = RNA(n+1) + diphosphate. Its function is as follows. DNA-dependent RNA polymerase catalyzes the transcription of DNA into RNA using the four ribonucleoside triphosphates as substrates. This Cereibacter sphaeroides (strain ATCC 17025 / ATH 2.4.3) (Rhodobacter sphaeroides) protein is DNA-directed RNA polymerase subunit alpha.